The sequence spans 257 residues: Ribonuclease PH (257 aa).

Phosphate-binding positions include arginine 88 and 126–128 (GTR).

This sequence belongs to the RNase PH family. In terms of assembly, homohexameric ring arranged as a trimer of dimers.

The catalysed reaction is tRNA(n+1) + phosphate = tRNA(n) + a ribonucleoside 5'-diphosphate. Phosphorolytic 3'-5' exoribonuclease that plays an important role in tRNA 3'-end maturation. Removes nucleotide residues following the 3'-CCA terminus of tRNAs; can also add nucleotides to the ends of RNA molecules by using nucleoside diphosphates as substrates, but this may not be physiologically important. Probably plays a role in initiation of 16S rRNA degradation (leading to ribosome degradation) during starvation. The sequence is that of Ribonuclease PH from Nocardia farcinica (strain IFM 10152).